The following is a 631-amino-acid chain: Probable potassium transport system protein Kup 1 (631 aa).

The next 12 helical transmembrane spans lie at 16–36 (LGLSLAALGVVYGDIGTSPLY), 58–78 (VLSLIVWALILIVSLKYLVFV), 109–129 (VLVFLGLFGAALLYGDGTLTP), 145–165 (PLFHPYIVPITVVILILLFLI), 173–193 (VGALFGPVMVLWFTVLALLGI), 219–239 (GWSGFQVLGAVFLVVTGGEAL), 255–275 (WFCCVLPALLLNYFGQGALLL), 288–308 (LAPPWALYPLVLLATLATIIA), 345–365 (IYIPAVNWALMLATITLVAGF), 370–390 (GLAAAYGVAVATTMVITALLV), 402–422 (PLAVAGLTVVFLTVDLAFFGA), and 427–447 (VGAGGWIPLAAGLAVFTVMIT).

This sequence belongs to the HAK/KUP transporter (TC 2.A.72) family.

Its subcellular location is the cell inner membrane. The catalysed reaction is K(+)(in) + H(+)(in) = K(+)(out) + H(+)(out). Its function is as follows. Transport of potassium into the cell. Likely operates as a K(+):H(+) symporter. This is Probable potassium transport system protein Kup 1 from Geobacter sulfurreducens (strain ATCC 51573 / DSM 12127 / PCA).